Reading from the N-terminus, the 91-residue chain is UPF0358 protein SAS1047 (91 aa).

Belongs to the UPF0358 family.

The protein is UPF0358 protein SAS1047 of Staphylococcus aureus (strain MSSA476).